The chain runs to 354 residues: UDP-N-acetylglucosamine--N-acetylmuramyl-(pentapeptide) pyrophosphoryl-undecaprenol N-acetylglucosamine transferase (354 aa).

UDP-N-acetyl-alpha-D-glucosamine-binding positions include 11 to 13, Arg-164, Ser-194, and Gln-289; that span reads TAG.

It belongs to the glycosyltransferase 28 family. MurG subfamily.

Its subcellular location is the cell membrane. It catalyses the reaction di-trans,octa-cis-undecaprenyl diphospho-N-acetyl-alpha-D-muramoyl-L-alanyl-D-glutamyl-meso-2,6-diaminopimeloyl-D-alanyl-D-alanine + UDP-N-acetyl-alpha-D-glucosamine = di-trans,octa-cis-undecaprenyl diphospho-[N-acetyl-alpha-D-glucosaminyl-(1-&gt;4)]-N-acetyl-alpha-D-muramoyl-L-alanyl-D-glutamyl-meso-2,6-diaminopimeloyl-D-alanyl-D-alanine + UDP + H(+). The protein operates within cell wall biogenesis; peptidoglycan biosynthesis. In terms of biological role, cell wall formation. Catalyzes the transfer of a GlcNAc subunit on undecaprenyl-pyrophosphoryl-MurNAc-pentapeptide (lipid intermediate I) to form undecaprenyl-pyrophosphoryl-MurNAc-(pentapeptide)GlcNAc (lipid intermediate II). In Clostridium botulinum (strain Langeland / NCTC 10281 / Type F), this protein is UDP-N-acetylglucosamine--N-acetylmuramyl-(pentapeptide) pyrophosphoryl-undecaprenol N-acetylglucosamine transferase.